We begin with the raw amino-acid sequence, 290 residues long: Triplex capsid protein 1 (290 aa).

It belongs to the herpesviridae TRX1 protein family. In terms of assembly, interacts with TRX2, MCP and capsid vertex component 2/CVC2.

It localises to the virion. The protein resides in the host nucleus. Its function is as follows. Structural component of the T=16 icosahedral capsid. The capsid is composed of pentamers and hexamers of major capsid protein/MCP, which are linked together by heterotrimers called triplexes. These triplexes are formed by a single molecule of triplex protein 1/TRX1 and two copies of triplex protein 2/TRX2. Additionally, TRX1 is required for efficient transport of TRX2 to the nucleus, which is the site of capsid assembly. The sequence is that of Triplex capsid protein 1 from Human cytomegalovirus (strain AD169) (HHV-5).